Here is a 128-residue protein sequence, read N- to C-terminus: Platelet basic protein (128 aa).

An N-terminal signal peptide occupies residues 1-34 (MSLRLDTTPSCNSARPLHALQVLLLLSLLLTALA). Cystine bridges form between C63-C89 and C65-C105.

The protein belongs to the intercrine alpha (chemokine CxC) family. In terms of assembly, beta-thromboglobulin is a homotetramer. Proteolytic removal of residues 1-9 produces the active peptide connective tissue-activating peptide III (CTAP-III) (low-affinity platelet factor IV (LA-PF4)). Post-translationally, proteolytic removal of residues 1-13 produces the active peptide beta-thromboglobulin, which is released from platelets along with platelet factor 4 and platelet-derived growth factor. In terms of processing, NAP-2(1-66) is produced by proteolytical processing, probably after secretion by leukocytes other than neutrophils. NAP-2(73) and NAP-2(74) seem not be produced by proteolytical processing of secreted precursors but are released in an active form from platelets.

Its subcellular location is the secreted. In terms of biological role, LA-PF4 stimulates DNA synthesis, mitosis, glycolysis, intracellular cAMP accumulation, prostaglandin E2 secretion, and synthesis of hyaluronic acid and sulfated glycosaminoglycan. It also stimulates the formation and secretion of plasminogen activator by human synovial cells. NAP-2 is a ligand for CXCR1 and CXCR2, and NAP-2, NAP-2(73), NAP-2(74), NAP-2(1-66), and most potent NAP-2(1-63) are chemoattractants and activators for neutrophils. TC-1 and TC-2 are antibacterial proteins, in vitro released from activated platelet alpha-granules. CTAP-III(1-81) is more potent than CTAP-III desensitize chemokine-induced neutrophil activation. This Homo sapiens (Human) protein is Platelet basic protein (PPBP).